Consider the following 115-residue polypeptide: Transmembrane protein 218 (115 aa).

Transmembrane regions (helical) follow at residues 5 to 25 (VLGVGAGVFLLALIWVLVLLL), 38 to 58 (FSIVFVFLGALIITTVLLLFP), and 81 to 101 (YVLLAFLSAVFLGGLFLLLTH).

Belongs to the TMEM218 family. As to quaternary structure, interacts with TMEM67.

It is found in the membrane. It localises to the cell projection. The protein resides in the cilium. Functionally, may be involved in ciliary biogenesis or function. The protein is Transmembrane protein 218 (Tmem218) of Mus musculus (Mouse).